Consider the following 205-residue polypeptide: Holliday junction branch migration complex subunit RuvA (205 aa).

Residues 1-64 (MIGRIRGLLI…EDAQLLYGFI (64 aa)) are domain I. The domain II stretch occupies residues 65–143 (SKQERSLFRL…SLMEASVGSE (79 aa)). Residues 144-156 (REFMLQSNYTAPE) form a flexible linker region. The tract at residues 157 to 205 (AVNTAEEDAIAALLSLGYKPAQASKAVSSVYTDGMSSETLIKSALKSML) is domain III.

It belongs to the RuvA family. As to quaternary structure, homotetramer. Forms an RuvA(8)-RuvB(12)-Holliday junction (HJ) complex. HJ DNA is sandwiched between 2 RuvA tetramers; dsDNA enters through RuvA and exits via RuvB. An RuvB hexamer assembles on each DNA strand where it exits the tetramer. Each RuvB hexamer is contacted by two RuvA subunits (via domain III) on 2 adjacent RuvB subunits; this complex drives branch migration. In the full resolvosome a probable DNA-RuvA(4)-RuvB(12)-RuvC(2) complex forms which resolves the HJ.

The protein localises to the cytoplasm. In terms of biological role, the RuvA-RuvB-RuvC complex processes Holliday junction (HJ) DNA during genetic recombination and DNA repair, while the RuvA-RuvB complex plays an important role in the rescue of blocked DNA replication forks via replication fork reversal (RFR). RuvA specifically binds to HJ cruciform DNA, conferring on it an open structure. The RuvB hexamer acts as an ATP-dependent pump, pulling dsDNA into and through the RuvAB complex. HJ branch migration allows RuvC to scan DNA until it finds its consensus sequence, where it cleaves and resolves the cruciform DNA. This is Holliday junction branch migration complex subunit RuvA from Shewanella halifaxensis (strain HAW-EB4).